The chain runs to 155 residues: 17.6 kDa class I heat shock protein 1 (155 aa).

The sHSP domain occupies 39-154; that stretch reads SSSAIANARV…KAQVKSIDIS (116 aa).

The protein belongs to the small heat shock protein (HSP20) family. As to quaternary structure, forms oligomeric structures. Binds to AKR2A.

Its subcellular location is the cytoplasm. In terms of biological role, possesses chaperone activity. The sequence is that of 17.6 kDa class I heat shock protein 1 (HSP17.6A) from Arabidopsis thaliana (Mouse-ear cress).